Reading from the N-terminus, the 574-residue chain is Serine/threonine-protein kinase fray1 (574 aa).

The span at asparagine 24–glutamate 41 shows a compositional bias: basic and acidic residues. The tract at residues asparagine 24–histidine 64 is disordered. The Protein kinase domain maps to tyrosine 97–phenylalanine 357. ATP is bound by residues isoleucine 103–valine 111 and lysine 126. The Proton acceptor role is filled by aspartate 221. Position 256 is a phosphothreonine; by autocatalysis (threonine 256). Disordered stretches follow at residues tyrosine 381–methionine 447, leucine 462–glutamate 514, and phenylalanine 532–histidine 554. Composition is skewed to low complexity over residues serine 386–proline 403, lysine 418–asparagine 441, and leucine 462–leucine 475. Residues glycine 478–serine 491 are compositionally biased toward basic residues. Residues proline 492–proline 506 are compositionally biased toward low complexity. Residues lysine 536–histidine 553 are compositionally biased toward basic and acidic residues.

Belongs to the protein kinase superfamily. STE Ser/Thr protein kinase family. STE20 subfamily. It depends on Mn(2+) as a cofactor. Undergoes autophosphorylation in the catalytic domain.

The enzyme catalyses L-seryl-[protein] + ATP = O-phospho-L-seryl-[protein] + ADP + H(+). The catalysed reaction is L-threonyl-[protein] + ATP = O-phospho-L-threonyl-[protein] + ADP + H(+). The protein is Serine/threonine-protein kinase fray1 of Dictyostelium discoideum (Social amoeba).